The sequence spans 623 residues: Indolepyruvate oxidoreductase subunit IorA (623 aa).

8 residues coordinate [4Fe-4S] cluster: cysteine 573, cysteine 576, cysteine 579, cysteine 585, cysteine 602, cysteine 605, cysteine 608, and cysteine 612. The 4Fe-4S ferredoxin-type domain maps to glutamate 593–serine 622.

Heterodimer of the IorA and IorB subunits. It depends on [4Fe-4S] cluster as a cofactor.

It catalyses the reaction indole-3-pyruvate + 2 oxidized [2Fe-2S]-[ferredoxin] + CoA = (indol-3-yl)acetyl-CoA + 2 reduced [2Fe-2S]-[ferredoxin] + CO2 + H(+). Functionally, catalyzes the ferredoxin-dependent oxidative decarboxylation of arylpyruvates. This Archaeoglobus fulgidus (strain ATCC 49558 / DSM 4304 / JCM 9628 / NBRC 100126 / VC-16) protein is Indolepyruvate oxidoreductase subunit IorA (iorA).